Here is a 323-residue protein sequence, read N- to C-terminus: MLKSTVNNTRIKCGHIDQRRNYLFTTLAGTVLGSFLWSKNNVLASKMENGELHYHDPNLKFNKKLFNGKPPFERRTPDYPGHVPLYNFEKVLMFLGSSMGAFFHPEENKYIVALGESTAITPILQNLRHKMLSDPVGRTILREKPRMTSDSLNLTYLRSLPDNTIGKNYVNWLDKEHVSPDTRVAVRYIDNEELAYIYQRYRECHDFYHAITGLPIIIEGEIAVKVFEFANIGIPMSGLGALFAPLRLKSSQRQRLREIYYPWAIKNGLFSKPLINVYWEKILEKDVDEFRQEMGIQQPPDLRNMRKEYFAKKKLEKQLQGGK.

Residues H205, D206, H209, and E221 each contribute to the Zn(2+) site.

It belongs to the COQ4 family. As to quaternary structure, component of a multi-subunit COQ enzyme complex, composed of at least COQ3, COQ4, COQ5, COQ6, COQ7 and COQ9. Zn(2+) serves as cofactor.

It is found in the mitochondrion inner membrane. It catalyses the reaction a 4-hydroxy-3-methoxy-5-(all-trans-polyprenyl)benzoate + H(+) = a 2-methoxy-6-(all-trans-polyprenyl)phenol + CO2. It functions in the pathway cofactor biosynthesis; ubiquinone biosynthesis. Lyase that catalyzes the C1-decarboxylation of 4-hydroxy-3-methoxy-5-(all-trans-polyprenyl)benzoic acid into 2-methoxy-6-(all-trans-polyprenyl)phenol during ubiquinone biosynthesis. The protein is Ubiquinone biosynthesis protein COQ4, mitochondrial of Candida albicans (strain SC5314 / ATCC MYA-2876) (Yeast).